A 182-amino-acid polypeptide reads, in one-letter code: Protein GrpE (182 aa).

Basic and acidic residues predominate over residues 1-17 (MEEKKRCEESEKIKEQE). The tract at residues 1–33 (MEEKKRCEESEKIKEQENETLPNEDSPSMGKKV) is disordered.

The protein belongs to the GrpE family. As to quaternary structure, homodimer.

Its subcellular location is the cytoplasm. Participates actively in the response to hyperosmotic and heat shock by preventing the aggregation of stress-denatured proteins, in association with DnaK and GrpE. It is the nucleotide exchange factor for DnaK and may function as a thermosensor. Unfolded proteins bind initially to DnaJ; upon interaction with the DnaJ-bound protein, DnaK hydrolyzes its bound ATP, resulting in the formation of a stable complex. GrpE releases ADP from DnaK; ATP binding to DnaK triggers the release of the substrate protein, thus completing the reaction cycle. Several rounds of ATP-dependent interactions between DnaJ, DnaK and GrpE are required for fully efficient folding. The protein is Protein GrpE of Borrelia hermsii (strain HS1 / DAH).